Reading from the N-terminus, the 118-residue chain is Putative pterin-4-alpha-carbinolamine dehydratase (118 aa).

The protein belongs to the pterin-4-alpha-carbinolamine dehydratase family.

The enzyme catalyses (4aS,6R)-4a-hydroxy-L-erythro-5,6,7,8-tetrahydrobiopterin = (6R)-L-erythro-6,7-dihydrobiopterin + H2O. In Pseudomonas entomophila (strain L48), this protein is Putative pterin-4-alpha-carbinolamine dehydratase.